The chain runs to 290 residues: TIP41-like protein (290 aa).

Belongs to the TIP41 family. Interacts with TAP46. Widely expressed.

Its function is as follows. May be involved in the regulation of the TOR signaling pathway. Indirectly activates the PP2A phosphatase via interaction with its suppressor TAP46. Could play a role in cytoskeleton functions. This Arabidopsis thaliana (Mouse-ear cress) protein is TIP41-like protein.